The chain runs to 2195 residues: Genome polyprotein (2195 aa).

The N-myristoyl glycine; by host moiety is linked to residue Gly2. Residues Gly2–Gln1505 are Cytoplasmic-facing. The amphipathic alpha-helix stretch occupies residues Leu567 to Val583. Residues His882 and Asp900 each act as for protease 2A activity in the active site. Positions 917 and 919 each coordinate Zn(2+). Residue Cys971 is the For protease 2A activity of the active site. Zn(2+) is bound by residues Cys977 and His979. Residues Asn1111–Gln1183 form a membrane-binding region. An oligomerization region spans residues Asn1111–Thr1249. The segment at Ser1132 to Gln1136 is RNA-binding. In terms of domain architecture, SF3 helicase spans Glu1215–Asn1371. The Zn(2+) site is built by Cys1379, Cys1391, and Cys1396. A C4-type; degenerate zinc finger spans residues Cys1379–Cys1396. Residues Glu1423–Val1430 are RNA-binding. The interval Leu1434–Gln1439 is oligomerization. The stretch at Ala1506–Tyr1521 is an intramembrane region. The Cytoplasmic segment spans residues Lys1522–Phe2195. Position 1531 is an O-(5'-phospho-RNA)-tyrosine (Tyr1531). The 179-residue stretch at Gly1551–Phe1729 folds into the Peptidase C3 domain. Active-site for protease 3C activity residues include His1590, Glu1621, and Cys1697. Residues Gly1960 to Leu2076 form the RdRp catalytic domain. 2 residues coordinate Mg(2+): Asp1966 and Asp2062.

It belongs to the picornaviruses polyprotein family. Interacts with capsid protein VP1 and capsid protein VP3 to form heterotrimeric protomers. As to quaternary structure, interacts with capsid protein VP0, and capsid protein VP3 to form heterotrimeric protomers. Five protomers subsequently associate to form pentamers which serve as building blocks for the capsid. Interacts with capsid protein VP2, capsid protein VP3 and capsid protein VP4 following cleavage of capsid protein VP0. In terms of assembly, interacts with capsid protein VP1 and capsid protein VP3 in the mature capsid. Interacts with capsid protein VP0 and capsid protein VP1 to form heterotrimeric protomers. Five protomers subsequently associate to form pentamers which serve as building blocks for the capsid. Interacts with capsid protein VP4 in the mature capsid. Interacts with protein 2C; this interaction may be important for virion morphogenesis. As to quaternary structure, interacts with capsid protein VP1 and capsid protein VP3. In terms of assembly, homodimer. Homohexamer; forms a hexameric ring structure with 6-fold symmetry characteristic of AAA+ ATPases. Interacts (via N-terminus) with host RTN3 (via reticulon domain); this interaction is important for viral replication. Interacts with capsid protein VP3; this interaction may be important for virion morphogenesis. As to quaternary structure, interacts with protein 3CD. In terms of assembly, homodimer. Interacts with host GBF1. Interacts (via GOLD domain) with host ACBD3 (via GOLD domain); this interaction allows the formation of a viral protein 3A/ACBD3 heterotetramer with a 2:2 stoichiometry, which will stimulate the recruitment of host PI4KB in order to synthesize PI4P at the viral RNA replication sites. Interacts with RNA-directed RNA polymerase. As to quaternary structure, interacts with protein 3AB and with RNA-directed RNA polymerase. In terms of assembly, interacts with Viral protein genome-linked and with protein 3CD. Requires Mg(2+) as cofactor. In terms of processing, specific enzymatic cleavages in vivo by the viral proteases yield processing intermediates and the mature proteins. Myristoylation is required for the formation of pentamers during virus assembly. Further assembly of 12 pentamers and a molecule of genomic RNA generates the provirion. Post-translationally, during virion maturation, immature virions are rendered infectious following cleavage of VP0 into VP4 and VP2. This maturation seems to be an autocatalytic event triggered by the presence of RNA in the capsid and it is followed by a conformational change infectious virion. In terms of processing, myristoylation is required during RNA encapsidation and formation of the mature virus particle. VPg is uridylylated by the polymerase into VPg-pUpU. This acts as a nucleotide-peptide primer for the genomic RNA replication.

The protein resides in the virion. It localises to the host cytoplasm. The protein localises to the host cytoplasmic vesicle membrane. Its subcellular location is the host nucleus. It carries out the reaction a ribonucleoside 5'-triphosphate + H2O = a ribonucleoside 5'-diphosphate + phosphate + H(+). It catalyses the reaction Selective cleavage of Tyr-|-Gly bond in the picornavirus polyprotein.. The catalysed reaction is RNA(n) + a ribonucleoside 5'-triphosphate = RNA(n+1) + diphosphate. The enzyme catalyses Selective cleavage of Gln-|-Gly bond in the poliovirus polyprotein. In other picornavirus reactions Glu may be substituted for Gln, and Ser or Thr for Gly.. Its activity is regulated as follows. Replication or transcription is subject to high level of random mutations by the nucleotide analog ribavirin. Forms an icosahedral capsid of pseudo T=3 symmetry with capsid proteins VP2 and VP3. The capsid is 300 Angstroms in diameter, composed of 60 copies of each capsid protein and enclosing the viral positive strand RNA genome. Capsid protein VP1 mainly forms the vertices of the capsid. Capsid protein VP1 interacts with host cell receptor to provide virion attachment to target host cells. This attachment induces virion internalization. Tyrosine kinases are probably involved in the entry process. After binding to its receptor, the capsid undergoes conformational changes. Capsid protein VP1 N-terminus (that contains an amphipathic alpha-helix) and capsid protein VP4 are externalized. Together, they shape a pore in the host membrane through which viral genome is translocated to host cell cytoplasm. Its function is as follows. Forms an icosahedral capsid of pseudo T=3 symmetry with capsid proteins VP2 and VP3. The capsid is 300 Angstroms in diameter, composed of 60 copies of each capsid protein and enclosing the viral positive strand RNA genome. Functionally, lies on the inner surface of the capsid shell. After binding to the host receptor, the capsid undergoes conformational changes. Capsid protein VP4 is released, Capsid protein VP1 N-terminus is externalized, and together, they shape a pore in the host membrane through which the viral genome is translocated into the host cell cytoplasm. In terms of biological role, component of immature procapsids, which is cleaved into capsid proteins VP4 and VP2 after maturation. Allows the capsid to remain inactive before the maturation step. Cysteine protease that cleaves viral polyprotein and specific host proteins. It is responsible for the autocatalytic cleavage between the P1 and P2 regions, which is the first cleavage occurring in the polyprotein. Also cleaves the host translation initiation factor EIF4G1, in order to shut down the capped cellular mRNA translation. Inhibits the host nucleus-cytoplasm protein and RNA trafficking by cleaving host members of the nuclear pores. Counteracts stress granule formation probably by antagonizing its assembly or promoting its dissassembly. Its function is as follows. Plays an essential role in the virus replication cycle by acting as a viroporin. Creates a pore in the host endoplasmic reticulum and as a consequence releases Ca2+ in the cytoplasm of infected cell. In turn, high levels of cytoplasmic calcium may trigger membrane trafficking and transport of viral ER-associated proteins to viroplasms, sites of viral genome replication. Functionally, induces and associates with structural rearrangements of intracellular membranes. Displays RNA-binding, nucleotide binding and NTPase activities. May play a role in virion morphogenesis and viral RNA encapsidation by interacting with the capsid protein VP3. In terms of biological role, localizes the viral replication complex to the surface of membranous vesicles. Together with protein 3CD binds the Cis-Active RNA Element (CRE) which is involved in RNA synthesis initiation. Acts as a cofactor to stimulate the activity of 3D polymerase, maybe through a nucleid acid chaperone activity. Localizes the viral replication complex to the surface of membranous vesicles. It inhibits host cell endoplasmic reticulum-to-Golgi apparatus transport and causes the disassembly of the Golgi complex, possibly through GBF1 interaction. This would result in depletion of MHC, trail receptors and IFN receptors at the host cell surface. Plays an essential role in viral RNA replication by recruiting ACBD3 and PI4KB at the viral replication sites, thereby allowing the formation of the rearranged membranous structures where viral replication takes place. Its function is as follows. Acts as a primer for viral RNA replication and remains covalently bound to viral genomic RNA. VPg is uridylylated prior to priming replication into VPg-pUpU. The oriI viral genomic sequence may act as a template for this. The VPg-pUpU is then used as primer on the genomic RNA poly(A) by the RNA-dependent RNA polymerase to replicate the viral genome. During genome replication, the VPg-RNA linkage is removed by the host TDP2, thereby accelerating replication. During the late stage of the replication cycle, host TDP2 is excluded from sites of viral RNA synthesis and encapsidation, allowing for the generation of progeny virions. Functionally, involved in the viral replication complex and viral polypeptide maturation. It exhibits protease activity with a specificity and catalytic efficiency that is different from protease 3C. Protein 3CD lacks polymerase activity. The 3C domain in the context of protein 3CD may have an RNA binding activity. Protein 3CD binds to the 5'UTR of the viral genome. In terms of biological role, replicates the viral genomic RNA on the surface of intracellular membranes. May form linear arrays of subunits that propagate along a strong head-to-tail interaction called interface-I. Covalently attaches UMP to a tyrosine of VPg, which is used to prime RNA synthesis. The positive stranded RNA genome is first replicated at virus induced membranous vesicles, creating a dsRNA genomic replication form. This dsRNA is then used as template to synthesize positive stranded RNA genomes. ss(+)RNA genomes are either translated, replicated or encapsidated. Major viral protease that mediates proteolytic processing of the polyprotein. Cleaves host EIF5B, contributing to host translation shutoff. Also cleaves host PABPC1, contributing to host translation shutoff. Cleaves host NLRP1, triggers host N-glycine-mediated degradation of the autoinhibitory NLRP1 N-terminal fragment. The polypeptide is Genome polyprotein (Echovirus 11 (strain Gregory)).